We begin with the raw amino-acid sequence, 296 residues long: Maltose/maltodextrin transport system permease protein MalG (296 aa).

At 1-12 (MAMVQGKSLKYR) the chain is on the cytoplasmic side. Residues 13–35 (VWATHIALWAFLSMIIFPLLMIV) traverse the membrane as a helical segment. At 36–88 (AISFREGNFATGSLIPDNPSLEHWKLALGFSVTNADGSVTPPPFPVLTWLWNS) the chain is on the periplasmic side. The ABC transmembrane type-1 domain occupies 85-281 (LWNSVKVAGI…LPITIVFLLA (197 aa)). Residues 89–111 (VKVAGITSILIVALSTTSAYAFA) form a helical membrane-spanning segment. The Cytoplasmic portion of the chain corresponds to 112–123 (RLRFKGKETILK). A helical transmembrane segment spans residues 124 to 143 (AMMIFQMFPAVLALVALYAL). Residues 144–152 (FDKLGQYIP) lie on the Periplasmic side of the membrane. Residues 153-175 (FLGLNTHGGLIFSYLGGIALHVW) traverse the membrane as a helical segment. At 176–204 (TIKGYFETIDNSLEEAAALDGATPWQAFR) the chain is on the cytoplasmic side. Residues 205–227 (LVLLPLSVPILAVVFILSFIGVV) form a helical membrane-spanning segment. Topologically, residues 228–257 (GEVPVASLLLSDVNSYTLAVGMQQYLYPQN) are periplasmic. Residues 258 to 280 (YLWGDFAAAAVLSALPITIVFLL) traverse the membrane as a helical segment. Over 281-296 (AQRWLVGGLTAGGVKG) the chain is Cytoplasmic.

This sequence belongs to the binding-protein-dependent transport system permease family. MalFG subfamily. In terms of assembly, the complex is composed of two ATP-binding proteins (MalK), two transmembrane proteins (MalG and MalF) and a solute-binding protein (MalE).

Its subcellular location is the cell inner membrane. In terms of biological role, part of the ABC transporter complex MalEFGK involved in maltose/maltodextrin import. Probably responsible for the translocation of the substrate across the membrane. The protein is Maltose/maltodextrin transport system permease protein MalG (malG) of Vibrio vulnificus (strain CMCP6).